Consider the following 196-residue polypeptide: Probable malonic semialdehyde reductase RutE (196 aa).

The protein belongs to the nitroreductase family. HadB/RutE subfamily. Requires FMN as cofactor.

The enzyme catalyses 3-hydroxypropanoate + NADP(+) = 3-oxopropanoate + NADPH + H(+). Its function is as follows. May reduce toxic product malonic semialdehyde to 3-hydroxypropionic acid, which is excreted. The chain is Probable malonic semialdehyde reductase RutE from Shigella sonnei (strain Ss046).